A 468-amino-acid chain; its full sequence is ATP synthase subunit beta 3 (468 aa).

155-162 (GGAGVGKT) contacts ATP.

The protein belongs to the ATPase alpha/beta chains family. As to quaternary structure, F-type ATPases have 2 components, CF(1) - the catalytic core - and CF(0) - the membrane proton channel. CF(1) has five subunits: alpha(3), beta(3), gamma(1), delta(1), epsilon(1). CF(0) has three main subunits: a(1), b(2) and c(9-12). The alpha and beta chains form an alternating ring which encloses part of the gamma chain. CF(1) is attached to CF(0) by a central stalk formed by the gamma and epsilon chains, while a peripheral stalk is formed by the delta and b chains.

The protein localises to the cell inner membrane. It catalyses the reaction ATP + H2O + 4 H(+)(in) = ADP + phosphate + 5 H(+)(out). Functionally, produces ATP from ADP in the presence of a proton gradient across the membrane. The catalytic sites are hosted primarily by the beta subunits. In Syntrophotalea carbinolica (strain DSM 2380 / NBRC 103641 / GraBd1) (Pelobacter carbinolicus), this protein is ATP synthase subunit beta 3.